The following is a 392-amino-acid chain: Nicotinate phosphoribosyltransferase (392 aa).

Histidine 214 is modified (phosphohistidine; by autocatalysis).

The protein belongs to the NAPRTase family. In terms of processing, transiently phosphorylated on a His residue during the reaction cycle. Phosphorylation strongly increases the affinity for substrates and increases the rate of nicotinate D-ribonucleotide production. Dephosphorylation regenerates the low-affinity form of the enzyme, leading to product release.

The enzyme catalyses nicotinate + 5-phospho-alpha-D-ribose 1-diphosphate + ATP + H2O = nicotinate beta-D-ribonucleotide + ADP + phosphate + diphosphate. It participates in cofactor biosynthesis; NAD(+) biosynthesis; nicotinate D-ribonucleotide from nicotinate: step 1/1. Functionally, catalyzes the synthesis of beta-nicotinate D-ribonucleotide from nicotinate and 5-phospho-D-ribose 1-phosphate at the expense of ATP. In Xanthomonas euvesicatoria pv. vesicatoria (strain 85-10) (Xanthomonas campestris pv. vesicatoria), this protein is Nicotinate phosphoribosyltransferase.